The primary structure comprises 126 residues: Fluoride-specific ion channel FluC (126 aa).

4 helical membrane-spanning segments follow: residues 5-25 (LHFL…WLLG), 35-55 (WGTL…LGLI), 68-88 (ALVT…AEVV), and 99-119 (AAGY…LGLA). G75 and T78 together coordinate Na(+).

Belongs to the fluoride channel Fluc/FEX (TC 1.A.43) family.

Its subcellular location is the cell inner membrane. The enzyme catalyses fluoride(in) = fluoride(out). With respect to regulation, na(+) is not transported, but it plays an essential structural role and its presence is essential for fluoride channel function. Functionally, fluoride-specific ion channel. Important for reducing fluoride concentration in the cell, thus reducing its toxicity. The protein is Fluoride-specific ion channel FluC of Bordetella avium (strain 197N).